The sequence spans 523 residues: UDP-N-acetylmuramyl-tripeptide synthetase (523 aa).

Ser-38 contacts UDP-N-acetyl-alpha-D-muramoyl-L-alanyl-D-glutamate. ATP is bound at residue 116–122; the sequence is GTKGKTT. Residues 162-163, Ser-189, and Arg-197 contribute to the UDP-N-acetyl-alpha-D-muramoyl-L-alanyl-D-glutamate site; that span reads TT. Lys-231 bears the N6-carboxylysine mark.

It belongs to the MurCDEF family. MurE subfamily. Carboxylation is probably crucial for Mg(2+) binding and, consequently, for the gamma-phosphate positioning of ATP.

It is found in the cytoplasm. It functions in the pathway cell wall biogenesis; peptidoglycan biosynthesis. In terms of biological role, catalyzes the addition of an amino acid to the nucleotide precursor UDP-N-acetylmuramoyl-L-alanyl-D-glutamate (UMAG) in the biosynthesis of bacterial cell-wall peptidoglycan. This chain is UDP-N-acetylmuramyl-tripeptide synthetase, found in Lactobacillus acidophilus (strain ATCC 700396 / NCK56 / N2 / NCFM).